A 136-amino-acid chain; its full sequence is Secreted RxLR effector protein 10 (136 aa).

A signal peptide spans 1–22 (MRVLNFVLTTTVVLLTSSEGIA). Positions 42–56 (RSLRATENPGSDESR) match the RxLR-dEER motif. The tract at residues 42–78 (RSLRATENPGSDESRLNEKDTGFDPDGSSSKEDEDIG) is disordered. A compositionally biased stretch (basic and acidic residues) spans 53–63 (DESRLNEKDTG).

Belongs to the RxLR effector family.

The protein localises to the secreted. Its subcellular location is the host cytoplasm. It localises to the host nucleus. Functionally, effector that acts as a broad suppressor of cell death to interrupt plant immunity. Inhibits cell death induced by cell death-inducing proteins, including the PAMP elicitor INF1 from P.infestans. This chain is Secreted RxLR effector protein 10, found in Plasmopara viticola (Downy mildew of grapevine).